Reading from the N-terminus, the 107-residue chain is Chlorobenzene dioxygenase, ferredoxin component (107 aa).

The 96-residue stretch at 4–99 (TYIMRQSDLP…IKVEGGDVHV (96 aa)) folds into the Rieske domain. [2Fe-2S] cluster contacts are provided by C43, H45, C62, and H65.

It belongs to the bacterial ring-hydroxylating dioxygenase ferredoxin component family. This dioxygenase system consists of four proteins: the two subunits of the oxygenase component (TecA1 and TecA2), a ferredoxin (TecA3) and a ferredoxin reductase (TecA4). [2Fe-2S] cluster is required as a cofactor.

Its pathway is aromatic compound metabolism. Part of the chlorobenzene dioxygenase system that catalyzes the dihydroxylation of a range of aromatic compounds, including chlorinated benzenes and toluenes, and dinuclear aromatics such as biphenyl and dibenzo-p-dioxin. The sequence is that of Chlorobenzene dioxygenase, ferredoxin component from Cupriavidus sp. (strain PS12).